A 311-amino-acid polypeptide reads, in one-letter code: Aspartate carbamoyltransferase catalytic subunit (311 aa).

Residues arginine 55 and threonine 56 each coordinate carbamoyl phosphate. Lysine 85 is an L-aspartate binding site. Carbamoyl phosphate-binding residues include arginine 106, histidine 135, and glutamine 138. L-aspartate-binding residues include arginine 168 and arginine 230. Residues leucine 268 and proline 269 each coordinate carbamoyl phosphate.

This sequence belongs to the aspartate/ornithine carbamoyltransferase superfamily. ATCase family. Heterododecamer (2C3:3R2) of six catalytic PyrB chains organized as two trimers (C3), and six regulatory PyrI chains organized as three dimers (R2).

It catalyses the reaction carbamoyl phosphate + L-aspartate = N-carbamoyl-L-aspartate + phosphate + H(+). The protein operates within pyrimidine metabolism; UMP biosynthesis via de novo pathway; (S)-dihydroorotate from bicarbonate: step 2/3. In terms of biological role, catalyzes the condensation of carbamoyl phosphate and aspartate to form carbamoyl aspartate and inorganic phosphate, the committed step in the de novo pyrimidine nucleotide biosynthesis pathway. This Yersinia pestis protein is Aspartate carbamoyltransferase catalytic subunit.